Reading from the N-terminus, the 66-residue chain is Venom protein 27.1 (66 aa).

An N-terminal signal peptide occupies residues 1–22 (MNTKTLIVVFLVCLLVSEVVLA).

In terms of processing, contains 1 disulfide bond. As to expression, expressed by the venom gland.

It localises to the secreted. This is Venom protein 27.1 from Lychas mucronatus (Chinese swimming scorpion).